The chain runs to 293 residues: ATP phosphoribosyltransferase (293 aa).

This sequence belongs to the ATP phosphoribosyltransferase family. Long subfamily. It depends on Mg(2+) as a cofactor.

Its subcellular location is the cytoplasm. It carries out the reaction 1-(5-phospho-beta-D-ribosyl)-ATP + diphosphate = 5-phospho-alpha-D-ribose 1-diphosphate + ATP. It participates in amino-acid biosynthesis; L-histidine biosynthesis; L-histidine from 5-phospho-alpha-D-ribose 1-diphosphate: step 1/9. Feedback inhibited by histidine. In terms of biological role, catalyzes the condensation of ATP and 5-phosphoribose 1-diphosphate to form N'-(5'-phosphoribosyl)-ATP (PR-ATP). Has a crucial role in the pathway because the rate of histidine biosynthesis seems to be controlled primarily by regulation of HisG enzymatic activity. The protein is ATP phosphoribosyltransferase of Solidesulfovibrio magneticus (strain ATCC 700980 / DSM 13731 / RS-1) (Desulfovibrio magneticus).